Reading from the N-terminus, the 249-residue chain is Isoprenyl transferase (249 aa).

Asp25 is a catalytic residue. Mg(2+) is bound at residue Asp25. Substrate is bound by residues 26-29 (GNGR), Trp30, Arg38, His42, and 70-72 (STE). Asn73 serves as the catalytic Proton acceptor. Substrate-binding positions include Trp74, Arg76, Arg197, and 203-205 (RLS). Glu216 provides a ligand contact to Mg(2+).

Belongs to the UPP synthase family. As to quaternary structure, homodimer. Requires Mg(2+) as cofactor.

Catalyzes the condensation of isopentenyl diphosphate (IPP) with allylic pyrophosphates generating different type of terpenoids. The polypeptide is Isoprenyl transferase (Streptococcus pyogenes serotype M6 (strain ATCC BAA-946 / MGAS10394)).